The primary structure comprises 233 residues: Bcl-2-like protein 1 (233 aa).

A BH4 motif is present at residues 4 to 24 (SNRELVVDFLSYKLSQKGYSW). Residues 27–73 (FSDVEENRTEAPEETEAERETPSAINGNPSWHLADSPAVNGATGHSS) form a disordered region. Phosphoserine; by PLK3 is present on Ser49. A Phosphoserine; by CDK1 modification is found at Ser62. A BH3 motif is present at residues 86–100 (VKQALREAGDEFELR). The BH1 motif lies at 129 to 148 (ELFRDGVNWGRIVAFFSFGG). Residues 180–195 (PWIQENGGWDTFVDLY) carry the BH2 motif. The chain crosses the membrane as a helical span at residues 210–226 (FNRWFLTGMTVAGVVLL).

Belongs to the Bcl-2 family. In terms of assembly, homodimer. Interacts with BAD. Interacts with PGAM5. Interacts with HEBP2. Interacts with p53/TP53 and BBC3; interaction with BBC3 disrupts the interaction with p53/TP53. Interacts with ATP5F1A and ATP5F1B; the interactions mediate the association of isoform Bcl-X(L) with the mitochondrial membrane ATP synthase F(1)F(0) ATP synthase. Interacts with VDAC1. Interacts with BCL2L11 (via BH3). Interacts with RNF183. Interacts with GIMAP3/IAN4 and GIMAP5/IAN5. Interacts with GIMAP5 and HSPA8/HSC70; the interaction between HSPA8 and BCL2L1 is impaired in the absence of GIMAP5. Interacts with isoform 4 of CLU; this interaction releases and activates BAX and promotes cell death. As to quaternary structure, forms heterodimers with BAX, BAK or BCL2; heterodimerization with BAX does not seem to be required for anti-apoptotic activity. Interacts with isoform 1 of SIVA1; the interaction inhibits the anti-apoptotic activity. Interacts with IKZF3. Interacts with RTL10/BOP. Interacts with DNM1L and CLTA; DNM1L and BCL2L1 isoform BCL-X(L) may form a complex in synaptic vesicles that also contains clathrin and MFF. Interacts (via the loop between motifs BH4 and BH3) with NLRP1 (via LRR repeats), but not with NLRP2, NLRP3, NLRP4, PYCARD, nor MEFV. Interacts with BECN1. In terms of processing, proteolytically cleaved by caspases during apoptosis. The cleaved protein, lacking the BH4 motif, has pro-apoptotic activity. Phosphorylated on Ser-62 by CDK1. This phosphorylation is partial in normal mitotic cells, but complete in G2-arrested cells upon DNA-damage, thus promoting subsequent apoptosis probably by triggering caspases-mediated proteolysis. Phosphorylated by PLK3, leading to regulate the G2 checkpoint and progression to cytokinesis during mitosis. Phosphorylation at Ser-49 appears during the S phase and G2, disappears rapidly in early mitosis during prometaphase, metaphase and early anaphase, and re-appears during telophase and cytokinesis. Post-translationally, ubiquitinated by RNF183 during prolonged ER stress, leading to degradation by the proteosome. Widely expressed, with highest levels in the brain, thymus, bone marrow, and kidney. Bcl-X(L) and Bcl-X(delta-TM) expression is enhanced in B- and T-lymphocytes that have been activated.

The protein resides in the mitochondrion membrane. Its subcellular location is the nucleus membrane. It is found in the cytoplasm. The protein localises to the cytoskeleton. It localises to the microtubule organizing center. The protein resides in the centrosome. Its subcellular location is the mitochondrion inner membrane. It is found in the mitochondrion outer membrane. The protein localises to the mitochondrion matrix. It localises to the cytoplasmic vesicle. The protein resides in the secretory vesicle. Its subcellular location is the synaptic vesicle membrane. It is found in the cytosol. In terms of biological role, potent inhibitor of cell death. Inhibits activation of caspases. Appears to regulate cell death by blocking the voltage-dependent anion channel (VDAC) by binding to it and preventing the release of the caspase activator, CYC1, from the mitochondrial membrane. Also acts as a regulator of G2 checkpoint and progression to cytokinesis during mitosis. Its function is as follows. Isoform Bcl-X(L) also regulates presynaptic plasticity, including neurotransmitter release and recovery, number of axonal mitochondria as well as size and number of synaptic vesicle clusters. During synaptic stimulation, increases ATP availability from mitochondria through regulation of mitochondrial membrane ATP synthase F(1)F(0) activity and regulates endocytic vesicle retrieval in hippocampal neurons through association with DMN1L and stimulation of its GTPase activity in synaptic vesicles. May attenuate inflammation impairing NLRP1-inflammasome activation, hence CASP1 activation and IL1B release. Functionally, isoform Bcl-X(S) promotes apoptosis. The sequence is that of Bcl-2-like protein 1 (Bcl2l1) from Mus musculus (Mouse).